Here is a 78-residue protein sequence, read N- to C-terminus: NAD(P)H-quinone oxidoreductase subunit O (78 aa).

Belongs to the complex I NdhO subunit family. NDH-1 can be composed of about 15 different subunits; different subcomplexes with different compositions have been identified which probably have different functions.

The protein localises to the cellular thylakoid membrane. The enzyme catalyses a plastoquinone + NADH + (n+1) H(+)(in) = a plastoquinol + NAD(+) + n H(+)(out). It catalyses the reaction a plastoquinone + NADPH + (n+1) H(+)(in) = a plastoquinol + NADP(+) + n H(+)(out). Its function is as follows. NDH-1 shuttles electrons from an unknown electron donor, via FMN and iron-sulfur (Fe-S) centers, to quinones in the respiratory and/or the photosynthetic chain. The immediate electron acceptor for the enzyme in this species is believed to be plastoquinone. Couples the redox reaction to proton translocation, and thus conserves the redox energy in a proton gradient. Cyanobacterial NDH-1 also plays a role in inorganic carbon-concentration. In Prochlorococcus marinus (strain MIT 9301), this protein is NAD(P)H-quinone oxidoreductase subunit O.